Reading from the N-terminus, the 211-residue chain is Large ribosomal subunit protein uL3 (211 aa).

Q150 is modified (N5-methylglutamine).

This sequence belongs to the universal ribosomal protein uL3 family. Part of the 50S ribosomal subunit. Forms a cluster with proteins L14 and L19. In terms of processing, methylated by PrmB.

One of the primary rRNA binding proteins, it binds directly near the 3'-end of the 23S rRNA, where it nucleates assembly of the 50S subunit. This is Large ribosomal subunit protein uL3 from Pseudomonas fluorescens (strain ATCC BAA-477 / NRRL B-23932 / Pf-5).